A 131-amino-acid chain; its full sequence is Profilin-4 (131 aa).

Residues cysteine 13 and cysteine 115 are joined by a disulfide bond. The Involved in PIP2 interaction motif lies at 81–97 (VVIRGKKGTGGITIKKT). Threonine 111 is modified (phosphothreonine).

The protein belongs to the profilin family. In terms of assembly, occurs in many kinds of cells as a complex with monomeric actin in a 1:1 ratio. In terms of processing, phosphorylated by MAP kinases. In terms of tissue distribution, expressed predominantly in endosperm but is also found at low levels in all tissues examined, including mature and germinated pollen.

It localises to the cytoplasm. The protein localises to the cytoskeleton. In terms of biological role, binds to actin and affects the structure of the cytoskeleton. At high concentrations, profilin prevents the polymerization of actin, whereas it enhances it at low concentrations. By binding to PIP2, it inhibits the formation of IP3 and DG. Has a high affinity for poly-proline. The sequence is that of Profilin-4 (PRO4) from Zea mays (Maize).